Reading from the N-terminus, the 523-residue chain is Putative UDP-glucuronosyltransferase ugt-50 (523 aa).

The N-terminal stretch at 1-25 (MHYSQMRWMFFCLTALLHGSFIVNA) is a signal peptide. N84, N248, N283, and N487 each carry an N-linked (GlcNAc...) asparagine glycan. The helical transmembrane segment at 490–508 (IIEHNHLDLFFYLCIISLL) threads the bilayer.

The protein belongs to the UDP-glycosyltransferase family.

The protein resides in the membrane. It carries out the reaction glucuronate acceptor + UDP-alpha-D-glucuronate = acceptor beta-D-glucuronoside + UDP + H(+). The sequence is that of Putative UDP-glucuronosyltransferase ugt-50 (ugt-50) from Caenorhabditis elegans.